A 424-amino-acid polypeptide reads, in one-letter code: Probable methyltransferase EP424R (424 aa).

One can recognise an Adrift-type SAM-dependent 2'-O-MTase domain in the interval 103–315 (QIVTNAWLKM…TYIVGKNRLR (213 aa)). Residues Gly135 and Asp228 each contribute to the S-adenosyl-L-methionine site. Lys268 (proton acceptor) is an active-site residue.

The protein localises to the virion. The sequence is that of Probable methyltransferase EP424R from Ornithodoros (relapsing fever ticks).